Here is a 225-residue protein sequence, read N- to C-terminus: Transcription factor HES-7 (225 aa).

Residues 12-69 (GPKMLKPLVEKRRRDRINRSLEELRLLLLERTRDQNLRNPKLEKAEILEFAVGYLRER) form the bHLH domain. In terms of domain architecture, Orange spans 92 to 122 (YLSGFRECLLRLAAFAHDASPAARSQLFSAL). The tract at residues 124–225 (GYRRPKPPRP…PPPAFWRPWP (102 aa)) is disordered. Composition is skewed to pro residues over residues 140–149 (LPAPRPPLDP) and 213–225 (PSLP…RPWP). Residues 221-224 (WRPW) carry the WRPW motif motif.

Transcription repression requires formation of a complex with a corepressor protein of the Groucho/TLE family.

It is found in the nucleus. Transcriptional repressor. Represses transcription from both N box- and E box-containing promoters. May with HES1, cooperatively regulate somite formation in the presomitic mesoderm (PSM). May function as a segmentation clock, which is essential for coordinated somite segmentation. This chain is Transcription factor HES-7 (Hes7), found in Mus musculus (Mouse).